The chain runs to 169 residues: Crossover junction endodeoxyribonuclease RuvC (169 aa).

Catalysis depends on residues Asp11, Glu71, and Asp143. The Mg(2+) site is built by Asp11, Glu71, and Asp143.

The protein belongs to the RuvC family. Homodimer which binds Holliday junction (HJ) DNA. The HJ becomes 2-fold symmetrical on binding to RuvC with unstacked arms; it has a different conformation from HJ DNA in complex with RuvA. In the full resolvosome a probable DNA-RuvA(4)-RuvB(12)-RuvC(2) complex forms which resolves the HJ. Requires Mg(2+) as cofactor.

The protein resides in the cytoplasm. It carries out the reaction Endonucleolytic cleavage at a junction such as a reciprocal single-stranded crossover between two homologous DNA duplexes (Holliday junction).. Functionally, the RuvA-RuvB-RuvC complex processes Holliday junction (HJ) DNA during genetic recombination and DNA repair. Endonuclease that resolves HJ intermediates. Cleaves cruciform DNA by making single-stranded nicks across the HJ at symmetrical positions within the homologous arms, yielding a 5'-phosphate and a 3'-hydroxyl group; requires a central core of homology in the junction. The consensus cleavage sequence is 5'-(A/T)TT(C/G)-3'. Cleavage occurs on the 3'-side of the TT dinucleotide at the point of strand exchange. HJ branch migration catalyzed by RuvA-RuvB allows RuvC to scan DNA until it finds its consensus sequence, where it cleaves and resolves the cruciform DNA. The chain is Crossover junction endodeoxyribonuclease RuvC from Rhizobium johnstonii (strain DSM 114642 / LMG 32736 / 3841) (Rhizobium leguminosarum bv. viciae).